We begin with the raw amino-acid sequence, 148 residues long: Transcriptional regulator MraZ (148 aa).

SpoVT-AbrB domains follow at residues 5-51 and 80-123; these read STQL…PQPV and ACDV…DMAK.

It belongs to the MraZ family. Forms oligomers.

It localises to the cytoplasm. The protein resides in the nucleoid. This Nitrosomonas eutropha (strain DSM 101675 / C91 / Nm57) protein is Transcriptional regulator MraZ.